A 179-amino-acid chain; its full sequence is Bifunctional protein PyrR (179 aa).

The PRPP-binding motif lies at 100–112 (VILIDDVLFTGRT).

This sequence belongs to the purine/pyrimidine phosphoribosyltransferase family. PyrR subfamily.

It carries out the reaction UMP + diphosphate = 5-phospho-alpha-D-ribose 1-diphosphate + uracil. Its function is as follows. Regulates the transcription of the pyrimidine nucleotide (pyr) operon in response to exogenous pyrimidines. Functionally, also displays a weak uracil phosphoribosyltransferase activity which is not physiologically significant. In Mannheimia succiniciproducens (strain KCTC 0769BP / MBEL55E), this protein is Bifunctional protein PyrR.